We begin with the raw amino-acid sequence, 901 residues long: Protein translocase subunit SecA (901 aa).

ATP is bound by residues Gln-87, 105 to 109 (GEGKT), and Asp-512. Residues 858–891 (SHQDDDTAAAAALAAQTGDRKVGRNDPCPCGSGK) are disordered. Zn(2+) contacts are provided by Cys-885, Cys-887, Cys-896, and His-897.

Belongs to the SecA family. Monomer and homodimer. Part of the essential Sec protein translocation apparatus which comprises SecA, SecYEG and auxiliary proteins SecDF-YajC and YidC. It depends on Zn(2+) as a cofactor.

The protein resides in the cell inner membrane. Its subcellular location is the cytoplasm. It carries out the reaction ATP + H2O + cellular proteinSide 1 = ADP + phosphate + cellular proteinSide 2.. In terms of biological role, part of the Sec protein translocase complex. Interacts with the SecYEG preprotein conducting channel. Has a central role in coupling the hydrolysis of ATP to the transfer of proteins into and across the cell membrane, serving both as a receptor for the preprotein-SecB complex and as an ATP-driven molecular motor driving the stepwise translocation of polypeptide chains across the membrane. In Escherichia fergusonii (strain ATCC 35469 / DSM 13698 / CCUG 18766 / IAM 14443 / JCM 21226 / LMG 7866 / NBRC 102419 / NCTC 12128 / CDC 0568-73), this protein is Protein translocase subunit SecA.